A 1495-amino-acid chain; its full sequence is Terminal uridylyltransferase 7 (1495 aa).

4 disordered regions span residues 1–30 (MGDT…GHPQ), 43–69 (HGSK…RKGP), 89–140 (WMND…EDGY), and 162–205 (LETT…PVID). The span at 15–26 (DRGTMDDDDFRR) shows a compositional bias: basic and acidic residues. Phosphothreonine occurs at positions 57 and 64. Basic and acidic residues-rich tracts occupy residues 92–118 (DSHK…EFKP) and 128–140 (QRKD…EDGY). Phosphoserine occurs at positions 132 and 172. Residues 178–187 (QRSRPRKPRK) show a composition bias toward basic residues. The Matrin-type zinc finger occupies 244–274 (YTCRLCDVLIESIAFAHKHIKEKRHKKNIKE). Residues 551 to 600 (VGQLWVELLRFYALEFNLADLVISIRVKELVSRELKDWPKKRIAIEDPYS) form the PAP-associated 1 domain. The residue at position 600 (serine 600) is a Phosphoserine. Residues 734 to 756 (DDYKGDKVYHPETGRKNEKEKVG) show a composition bias toward basic and acidic residues. 2 disordered regions span residues 734–757 (DDYK…KVGR) and 831–898 (THSV…EDDE). A compositionally biased stretch (polar residues) spans 831 to 841 (THSVQGQTSEM). Composition is skewed to acidic residues over residues 843–859 (PSDE…EEEE), 868–880 (EDED…DELD), and 887–898 (GDEDALSEEDDE). A Phosphoserine modification is found at serine 844. Phosphoserine is present on residues serine 893 and serine 939. Residues 951 to 1495 (SKLIFTKGKS…ASAKRTQQES (545 aa)) are sufficient for monouridylation activity. The CCHC-type 1 zinc finger occupies 963-980 (VVCSLCKREGHLKKDCPE). UTP contacts are provided by residues 1047-1050 (SSKN), 1057-1060 (SDLD), asparagine 1130, lysine 1152, 1170-1174 (SYAYT), and histidine 1286. 2 residues coordinate Mg(2+): aspartate 1058 and aspartate 1060. Positions 1233 to 1286 (SVGQLWLGLLRFYTEEFDFKEHVISIRRKSLLTTFKKQWTSKYIVIEDPFDLNH) constitute a PAP-associated 2 domain. The CCHC-type 2 zinc finger occupies 1345 to 1362 (RCCRICGKIGHFMKDCPM). 2 disordered regions span residues 1367–1424 (RRRR…MRAA) and 1466–1495 (CPQF…QQES). Over residues 1381–1410 (PENKEKRSKEDKEIHNKYTEREVSTKEDKP) the composition is skewed to basic and acidic residues. The CCHC-type 3 zinc-finger motif lies at 1451–1468 (KRCFICGREGHIKKECPQ). A compositionally biased stretch (polar residues) spans 1470-1485 (KGSSGSLSSKYMTQGK).

The protein belongs to the DNA polymerase type-B-like family. As to quaternary structure, interacts with MOV10; the interaction is RNA-dependent. It depends on Mg(2+) as a cofactor. Requires Mn(2+) as cofactor.

The protein localises to the cytoplasm. The catalysed reaction is RNA(n) + UTP = RNA(n)-3'-uridine ribonucleotide + diphosphate. In terms of biological role, uridylyltransferase that mediates the terminal uridylation of mRNAs with short (less than 25 nucleotides) poly(A) tails, hence facilitating global mRNA decay. Essential for both oocyte maturation and fertility. Through 3' terminal uridylation of mRNA, sculpts, with TUT7, the maternal transcriptome by eliminating transcripts during oocyte growth. Involved in microRNA (miRNA)-induced gene silencing through uridylation of deadenylated miRNA targets. Also functions as an integral regulator of microRNA biogenesiS using 3 different uridylation mechanisms. Acts as a suppressor of miRNA biogenesis by mediating the terminal uridylation of some miRNA precursors, including that of let-7 (pre-let-7). Uridylated pre-let-7 RNA is not processed by Dicer and undergo degradation. Pre-let-7 uridylation is strongly enhanced in the presence of LIN28A. In the absence of LIN28A, TUT7 and TUT4 monouridylate group II pre-miRNAs, which includes most of pre-let7 members, that shapes an optimal 3' end overhang for efficient processing. Add oligo-U tails to truncated pre-miRNAS with a 5' overhang which may promote rapid degradation of non-functional pre-miRNA species. Does not play a role in replication-dependent histone mRNA degradation. Due to functional redundancy between TUT4 and TUT7, the identification of the specific role of each of these proteins is difficult. TUT4 and TUT7 restrict retrotransposition of long interspersed element-1 (LINE-1) in cooperation with MOV10 counteracting the RNA chaperonne activity of L1RE1. TUT7 uridylates LINE-1 mRNAs in the cytoplasm which inhibits initiation of reverse transcription once in the nucleus, whereas uridylation by TUT4 destabilizes mRNAs in cytoplasmic ribonucleoprotein granules. In Homo sapiens (Human), this protein is Terminal uridylyltransferase 7.